Here is a 417-residue protein sequence, read N- to C-terminus: Phosphoglycerate kinase 1 (417 aa).

S2 is modified (N-acetylserine). 2 positions are modified to phosphoserine: S2 and S4. K6 carries the N6-succinyllysine modification. K11 carries the post-translational modification N6-acetyllysine. Positions 23, 24, 25, 26, 38, and 39 each coordinate (2R)-3-phosphoglycerate. The segment at 38–43 (QRIKAA) is mitochondrial targeting region exposed following cis-trans isomerization by PIN1 and recognized by the TOM complex for mitochondrial translocation of the protein. An N6-acetyllysine; alternate modification is found at K48. K48 is subject to N6-succinyllysine; alternate. (2R)-3-phosphoglycerate-binding residues include S62, H63, G65, and R66. N6-acetyllysine is present on K75. A Phosphotyrosine modification is found at Y76. Residues K86 and K91 each carry the N6-acetyllysine modification. K97 carries the post-translational modification N6-acetyllysine; alternate. At K97 the chain carries N6-(2-hydroxyisobutyryl)lysine; alternate. Positions 122 and 123 each coordinate (2R)-3-phosphoglycerate. K131 is modified (N6-acetyllysine; alternate). Residue K131 is modified to N6-malonyllysine; alternate. K146 carries the N6-acetyllysine modification. The (2R)-3-phosphoglycerate site is built by H170 and R171. The residue at position 191 (K191) is an N6-succinyllysine. Y196 is subject to Phosphotyrosine. The residue at position 199 (K199) is an N6-acetyllysine. The residue at position 203 (S203) is a Phosphoserine. Position 214 (G214) interacts with ADP. G214 contributes to the CDP binding site. AMP contacts are provided by A215 and K216. Residue A215 participates in ATP binding. Mg(2+) is bound at residue A215. Residue K216 is modified to N6-(2-hydroxyisobutyryl)lysine. A218 and D219 together coordinate Mg(2+). D219 is a CDP binding site. K220 lines the AMP pocket. K220 contacts ATP. At K220 the chain carries N6-(2-hydroxyisobutyryl)lysine. Position 238 (G238) interacts with ADP. A CDP-binding site is contributed by G238. Residue G239 coordinates AMP. Residue G239 coordinates ATP. K267 and K291 each carry N6-acetyllysine. G313 is a binding site for AMP. ATP is bound at residue G313. Residue K323 is modified to N6-(2-hydroxyisobutyryl)lysine. 3 residues coordinate CDP: G338, V340, and F343. An ADP-binding site is contributed by F343. E344 is an AMP binding site. E344 lines the ATP pocket. Residue S354 is modified to Phosphoserine. K361 is modified (N6-acetyllysine). ATP is bound by residues D375 and T376. Residue D375 coordinates Mg(2+).

The protein belongs to the phosphoglycerate kinase family. In terms of assembly, monomer. Interacts with kinase MAPK1/ERK2; the interaction is direct, occurs under hypoxic conditions, and promotes its interaction with PIN1. Interacts with peptidyl-prolyl cis-trans isomerase PIN1; the interaction is direct, occurs under hypoxic conditions, and targets the protein to the mitochondrion by promoting interactions with the TOM complex. Interacts with mitochondrial circRNA mcPGK1 (via its 2nd stem-loop); the interaction is direct and targets the protein to the mitochondrion by promoting interactions with the TOM complex. Interacts with pyruvate dehydrogenase kinase PDK1; the interaction is direct, occurs under hypoxic conditions and leads to PDK1-mediated inhibition of pyruvate dehydrogenase complex activity. The cofactor is Mg(2+). Post-translationally, phosphorylated at Ser-203 by MAPK1/ERK2 under hypoxic conditions, which promotes its mitochondrial targeting.

The protein resides in the cytoplasm. It is found in the cytosol. Its subcellular location is the mitochondrion matrix. The enzyme catalyses (2R)-3-phosphoglycerate + ATP = (2R)-3-phospho-glyceroyl phosphate + ADP. It carries out the reaction L-seryl-[protein] + ATP = O-phospho-L-seryl-[protein] + ADP + H(+). The protein operates within carbohydrate degradation; glycolysis; pyruvate from D-glyceraldehyde 3-phosphate: step 2/5. In terms of biological role, catalyzes one of the two ATP producing reactions in the glycolytic pathway via the reversible conversion of 1,3-diphosphoglycerate to 3-phosphoglycerate. Both L- and D- forms of purine and pyrimidine nucleotides can be used as substrates, but the activity is much lower on pyrimidines. In addition to its role as a glycolytic enzyme, it seems that PGK-1 acts as a polymerase alpha cofactor protein (primer recognition protein). Acts as a protein kinase when localized to the mitochondrion where it phosphorylates pyruvate dehydrogenase kinase PDK1 to inhibit pyruvate dehydrogenase complex activity and suppress the formation of acetyl-coenzyme A from pyruvate, and consequently inhibit oxidative phosphorylation and promote glycolysis. May play a role in sperm motility. This Rattus norvegicus (Rat) protein is Phosphoglycerate kinase 1 (Pgk1).